The chain runs to 410 residues: Argininosuccinate synthase (410 aa).

10–18 serves as a coordination point for ATP; sequence AYSGGLDTS. Residues Y88 and S93 each contribute to the L-citrulline site. G118 lines the ATP pocket. The L-aspartate site is built by T120, N124, and D125. Residue N124 coordinates L-citrulline. R128, S177, S186, E262, and Y274 together coordinate L-citrulline.

Belongs to the argininosuccinate synthase family. Type 1 subfamily. As to quaternary structure, homotetramer.

Its subcellular location is the cytoplasm. It carries out the reaction L-citrulline + L-aspartate + ATP = 2-(N(omega)-L-arginino)succinate + AMP + diphosphate + H(+). It participates in amino-acid biosynthesis; L-arginine biosynthesis; L-arginine from L-ornithine and carbamoyl phosphate: step 2/3. This is Argininosuccinate synthase from Thermoanaerobacter sp. (strain X514).